The primary structure comprises 149 residues: Calmodulin (149 aa).

A2 bears the N-acetylalanine mark. EF-hand domains lie at 8-43 (EQISEFKEAFSLFDKDGDGTITTKELGTVMRSLGQN), 44-79 (PTEAELQDMINEVDADGNGTIDFPEFLTMMARKMRD), 81-116 (DSEEEIKEAFKVFDKDGNGYISAAELRHVMTNLGEK), and 117-149 (LTDNEVDEMIREADVDGDGQINYEEFVKMMLSK). 20 residues coordinate Ca(2+): D21, D23, D25, T27, E32, D57, D59, N61, T63, E68, D94, D96, N98, Y100, E105, D130, D132, D134, Q136, and E141.

It belongs to the calmodulin family.

In terms of biological role, calmodulin mediates the control of a large number of enzymes, ion channels and other proteins by Ca(2+). Among the enzymes to be stimulated by the calmodulin-Ca(2+) complex are a number of protein kinases and phosphatases. This chain is Calmodulin (CMD1), found in Pleurotus ostreatus (Oyster mushroom).